A 266-amino-acid polypeptide reads, in one-letter code: Tryptophan synthase alpha chain (266 aa).

Active-site proton acceptor residues include glutamate 50 and aspartate 61.

The protein belongs to the TrpA family. Tetramer of two alpha and two beta chains.

The enzyme catalyses (1S,2R)-1-C-(indol-3-yl)glycerol 3-phosphate + L-serine = D-glyceraldehyde 3-phosphate + L-tryptophan + H2O. It participates in amino-acid biosynthesis; L-tryptophan biosynthesis; L-tryptophan from chorismate: step 5/5. Its function is as follows. The alpha subunit is responsible for the aldol cleavage of indoleglycerol phosphate to indole and glyceraldehyde 3-phosphate. The protein is Tryptophan synthase alpha chain of Alkaliphilus metalliredigens (strain QYMF).